The sequence spans 117 residues: Serine rich endogenous peptide 5 (117 aa).

The first 31 residues, 1–31, serve as a signal peptide directing secretion; that stretch reads MATKTSNFVSLRVSLFILLLFISSQVAIADA. Positions 41–55 match the SCOOP motif motif; that stretch reads LQIVRRSRSQRGRQY. Over residues 42–51 the composition is skewed to basic residues; the sequence is QIVRRSRSQR. A disordered region spans residues 42-117; sequence QIVRRSRSQR…LPYASSPTST (76 aa). The SxS motif essential for MIK2 binding motif lies at 47–49; that stretch reads SRS. The span at 60-84 shows a compositional bias: pro residues; sequence LRVPPPPPPPLPQMPSAATPPPMPQ.

In terms of assembly, interacts with MIK2 (via extracellular leucine-rich repeat domain); this interaction triggers the formation of complex between MIK2 and the BAK1/SERK3 and SERK4 coreceptors, and subsequent BAK1 activation by phosphorylation.

It localises to the cell membrane. It is found in the secreted. The protein localises to the extracellular space. The protein resides in the apoplast. Functionally, brassicaceae-specific phytocytokine (plant endogenous peptide released into the apoplast) perceived by MIK2 in a BAK1/SERK3 and SERK4 coreceptors-dependent manner, that modulates various physiological and antimicrobial processes including growth prevention and reactive oxygen species (ROS) response regulation. The polypeptide is Serine rich endogenous peptide 5 (Arabidopsis thaliana (Mouse-ear cress)).